Reading from the N-terminus, the 562-residue chain is Probable malate:quinone oxidoreductase (562 aa).

Positions 530-562 are disordered; it reads EVPDKSATPTDPTIAPKHQHSTTHNANSEMQAL. Residues 551–562 are compositionally biased toward polar residues; the sequence is TTHNANSEMQAL.

It belongs to the MQO family. The cofactor is FAD.

The catalysed reaction is (S)-malate + a quinone = a quinol + oxaloacetate. It participates in carbohydrate metabolism; tricarboxylic acid cycle; oxaloacetate from (S)-malate (quinone route): step 1/1. The chain is Probable malate:quinone oxidoreductase from Xylella fastidiosa (strain M12).